We begin with the raw amino-acid sequence, 889 residues long: DNA mismatch repair protein MutS (889 aa).

Position 622 to 629 (622 to 629 (GPNMAGKS)) interacts with ATP. Residues 869 to 889 (QRVKRPEKAPADVTAETEDQE) are disordered.

The protein belongs to the DNA mismatch repair MutS family.

Functionally, this protein is involved in the repair of mismatches in DNA. It is possible that it carries out the mismatch recognition step. This protein has a weak ATPase activity. This Desulfatibacillum aliphaticivorans protein is DNA mismatch repair protein MutS.